The following is a 191-amino-acid chain: Holliday junction branch migration complex subunit RuvA (191 aa).

Residues 1 to 64 (MIGRITGTLA…EDAHLLYGFG (64 aa)) are domain I. Positions 65 to 138 (SEVERAAFRE…KGKPVFAGAL (74 aa)) are domain II. The tract at residues 138 to 141 (LASV) is flexible linker. Residues 142 to 191 (PSAGASDDVRQALLALGYNERETAATVRELPAGLAVGEAIRQALRALSRA) form a domain III region.

Belongs to the RuvA family. Homotetramer. Forms an RuvA(8)-RuvB(12)-Holliday junction (HJ) complex. HJ DNA is sandwiched between 2 RuvA tetramers; dsDNA enters through RuvA and exits via RuvB. An RuvB hexamer assembles on each DNA strand where it exits the tetramer. Each RuvB hexamer is contacted by two RuvA subunits (via domain III) on 2 adjacent RuvB subunits; this complex drives branch migration. In the full resolvosome a probable DNA-RuvA(4)-RuvB(12)-RuvC(2) complex forms which resolves the HJ.

The protein resides in the cytoplasm. Functionally, the RuvA-RuvB-RuvC complex processes Holliday junction (HJ) DNA during genetic recombination and DNA repair, while the RuvA-RuvB complex plays an important role in the rescue of blocked DNA replication forks via replication fork reversal (RFR). RuvA specifically binds to HJ cruciform DNA, conferring on it an open structure. The RuvB hexamer acts as an ATP-dependent pump, pulling dsDNA into and through the RuvAB complex. HJ branch migration allows RuvC to scan DNA until it finds its consensus sequence, where it cleaves and resolves the cruciform DNA. The chain is Holliday junction branch migration complex subunit RuvA from Thiobacillus denitrificans (strain ATCC 25259 / T1).